Reading from the N-terminus, the 429-residue chain is Histidinol dehydrogenase (429 aa).

NAD(+) is bound by residues Y127, Q188, and N211. 3 residues coordinate substrate: S234, Q256, and H259. Residues Q256 and H259 each coordinate Zn(2+). Catalysis depends on proton acceptor residues E324 and H325. The substrate site is built by H325, D358, E412, and H417. D358 contacts Zn(2+). H417 contributes to the Zn(2+) binding site.

It belongs to the histidinol dehydrogenase family. Requires Zn(2+) as cofactor.

The catalysed reaction is L-histidinol + 2 NAD(+) + H2O = L-histidine + 2 NADH + 3 H(+). The protein operates within amino-acid biosynthesis; L-histidine biosynthesis; L-histidine from 5-phospho-alpha-D-ribose 1-diphosphate: step 9/9. Functionally, catalyzes the sequential NAD-dependent oxidations of L-histidinol to L-histidinaldehyde and then to L-histidine. The polypeptide is Histidinol dehydrogenase (Bacillus anthracis).